The sequence spans 408 residues: PTI1-like tyrosine-protein kinase 3 (408 aa).

A compositionally biased stretch (basic and acidic residues) spans 59–76 (SSENEHLRSPKHHNDFGH). The tract at residues 59 to 91 (SSENEHLRSPKHHNDFGHHTRKPQAAVKPDALK) is disordered. Residues 113–395 (FGSKSLIGEG…IVVKALQPLL (283 aa)) enclose the Protein kinase domain. ATP-binding positions include 119-127 (IGEGSYGRA) and Lys-141. Residue Asp-245 is the Proton acceptor of the active site.

This sequence belongs to the protein kinase superfamily. Tyr protein kinase family. As to quaternary structure, interacts with OXI1. Post-translationally, phosphorylated by OXI1.

Its subcellular location is the cell membrane. The enzyme catalyses L-tyrosyl-[protein] + ATP = O-phospho-L-tyrosyl-[protein] + ADP + H(+). This is PTI1-like tyrosine-protein kinase 3 (PTI13) from Arabidopsis thaliana (Mouse-ear cress).